A 559-amino-acid polypeptide reads, in one-letter code: Formate--tetrahydrofolate ligase (559 aa).

68–75 (TPAGEGKT) contributes to the ATP binding site.

It belongs to the formate--tetrahydrofolate ligase family.

The enzyme catalyses (6S)-5,6,7,8-tetrahydrofolate + formate + ATP = (6R)-10-formyltetrahydrofolate + ADP + phosphate. Its pathway is one-carbon metabolism; tetrahydrofolate interconversion. The sequence is that of Formate--tetrahydrofolate ligase from Rhizobium meliloti (strain 1021) (Ensifer meliloti).